Here is a 406-residue protein sequence, read N- to C-terminus: Phosphopentomutase (406 aa).

Asp10, Asp305, His310, Asp346, His347, and His358 together coordinate Mn(2+).

The protein belongs to the phosphopentomutase family. It depends on Mn(2+) as a cofactor.

It localises to the cytoplasm. The catalysed reaction is 2-deoxy-alpha-D-ribose 1-phosphate = 2-deoxy-D-ribose 5-phosphate. The enzyme catalyses alpha-D-ribose 1-phosphate = D-ribose 5-phosphate. It participates in carbohydrate degradation; 2-deoxy-D-ribose 1-phosphate degradation; D-glyceraldehyde 3-phosphate and acetaldehyde from 2-deoxy-alpha-D-ribose 1-phosphate: step 1/2. Functionally, isomerase that catalyzes the conversion of deoxy-ribose 1-phosphate (dRib-1-P) and ribose 1-phosphate (Rib-1-P) to deoxy-ribose 5-phosphate (dRib-5-P) and ribose 5-phosphate (Rib-5-P), respectively. The protein is Phosphopentomutase of Methylorubrum extorquens (strain PA1) (Methylobacterium extorquens).